The primary structure comprises 182 residues: Large ribosomal subunit protein uL15 (182 aa).

The segment at 1–52 (MDLSSLRPAKGAVKNKKRIGRGPGSGNGTTAGKGNKGQQSRSGYTRPVSEGG) is disordered. The span at 21–35 (RGPGSGNGTTAGKGN) shows a compositional bias: gly residues.

The protein belongs to the universal ribosomal protein uL15 family. In terms of assembly, part of the 50S ribosomal subunit.

In terms of biological role, binds to the 23S rRNA. In Chlorobium phaeobacteroides (strain BS1), this protein is Large ribosomal subunit protein uL15.